The primary structure comprises 362 residues: Dual-specificity RNA methyltransferase RlmN (362 aa).

Residue glutamate 100 is the Proton acceptor of the active site. Residues 106 to 345 (EPDRNTLCIS…VFIRNSRGED (240 aa)) form the Radical SAM core domain. Cysteine 113 and cysteine 350 form a disulfide bridge. The [4Fe-4S] cluster site is built by cysteine 120, cysteine 124, and cysteine 127. S-adenosyl-L-methionine contacts are provided by residues 177–178 (GE), serine 209, 231–233 (SLH), and asparagine 307. The active-site S-methylcysteine intermediate is cysteine 350.

The protein belongs to the radical SAM superfamily. RlmN family. [4Fe-4S] cluster serves as cofactor.

It localises to the cytoplasm. It carries out the reaction adenosine(2503) in 23S rRNA + 2 reduced [2Fe-2S]-[ferredoxin] + 2 S-adenosyl-L-methionine = 2-methyladenosine(2503) in 23S rRNA + 5'-deoxyadenosine + L-methionine + 2 oxidized [2Fe-2S]-[ferredoxin] + S-adenosyl-L-homocysteine. It catalyses the reaction adenosine(37) in tRNA + 2 reduced [2Fe-2S]-[ferredoxin] + 2 S-adenosyl-L-methionine = 2-methyladenosine(37) in tRNA + 5'-deoxyadenosine + L-methionine + 2 oxidized [2Fe-2S]-[ferredoxin] + S-adenosyl-L-homocysteine. Its function is as follows. Specifically methylates position 2 of adenine 2503 in 23S rRNA and position 2 of adenine 37 in tRNAs. m2A2503 modification seems to play a crucial role in the proofreading step occurring at the peptidyl transferase center and thus would serve to optimize ribosomal fidelity. The protein is Dual-specificity RNA methyltransferase RlmN of Desulfotalea psychrophila (strain LSv54 / DSM 12343).